Here is a 747-residue protein sequence, read N- to C-terminus: Tripartite terminase subunit 3 (747 aa).

A Nuclear localization signal motif is present at residues 194 to 198 (KRAKV). The Walker A motif motif lies at 267 to 274 (VPRRHGKT). Positions 361 to 366 (LLFVDE) match the Walker B motif motif. Residue glutamate 366 is the For ATPase activity of the active site. Catalysis depends on for nuclease activity residues aspartate 521, glutamate 593, and aspartate 722.

This sequence belongs to the herpesviridae TRM3 protein family. Interacts with the terminase subunits TRM1 and TRM2. Interacts with portal protein.

It localises to the host nucleus. In terms of biological role, component of the molecular motor that translocates viral genomic DNA in empty capsid during DNA packaging. Forms a tripartite terminase complex together with TRM1 and TRM2 in the host cytoplasm. Once the complex reaches the host nucleus, it interacts with the capsid portal vertex. This portal forms a ring in which genomic DNA is translocated into the capsid. TRM3 carries an RNase H-like nuclease activity that plays an important role for the cleavage of concatemeric viral DNA into unit length genomes. The sequence is that of Tripartite terminase subunit 3 from Homo sapiens (Human).